The primary structure comprises 198 residues: Tumor necrosis factor receptor superfamily member 22 (198 aa).

The Cytoplasmic segment spans residues 1-20; sequence MFGFFCSLVSSLSRWFLWRR. Residues 21 to 41 traverse the membrane as a helical; Signal-anchor for type II membrane protein segment; it reads LLLLLLLLLLNLPLQVKFAML. The Extracellular segment spans residues 42–198; the sequence is ELHSFKCPAG…SVVVFRIIRR (157 aa). TNFR-Cys repeat units lie at residues 47–82, 84–124, and 125–165; these read KCPAGEYWSKDVCCKNCSAGTFVKAPCEIPHTQGQC, KCHP…DRKC, and QCRT…NTVC. 9 disulfides stabilise this stretch: C48–C59, C60–C73, C63–C82, C85–C100, C103–C116, C106–C124, C126–C141, C144–C157, and C147–C165. N-linked (GlcNAc...) asparagine glycosylation occurs at N62. N158 carries an N-linked (GlcNAc...) asparagine glycan.

As to expression, ubiquitous.

It localises to the cell membrane. The protein localises to the secreted. Receptor for the cytotoxic ligand TNFSF10/TRAIL. Lacks a cytoplasmic death domain and hence is not capable of inducing apoptosis. Protects cells against TRAIL mediated apoptosis possibly through ligand competition. Cannot induce the NF-kappa-B pathway. The sequence is that of Tumor necrosis factor receptor superfamily member 22 (Tnfrsf22) from Mus musculus (Mouse).